The sequence spans 321 residues: Glutathione synthetase (321 aa).

The ATP-grasp domain maps to 125–311; sequence EKLFTGWFPH…IAGQFIAFLE (187 aa). 151–208 lines the ATP pocket; that stretch reads FIREQKEVVIKPLGAMAGESIFYLTVNDPNIPVVIETMTANGHQLVMAQRFIPEVKSG. Residues E282 and N284 each contribute to the Mg(2+) site.

It belongs to the prokaryotic GSH synthase family. Requires Mg(2+) as cofactor. It depends on Mn(2+) as a cofactor.

The enzyme catalyses gamma-L-glutamyl-L-cysteine + glycine + ATP = glutathione + ADP + phosphate + H(+). The protein operates within sulfur metabolism; glutathione biosynthesis; glutathione from L-cysteine and L-glutamate: step 2/2. This is Glutathione synthetase from Coxiella burnetii (strain RSA 493 / Nine Mile phase I).